The sequence spans 294 residues: Acetyl-coenzyme A carboxylase carboxyl transferase subunit beta (294 aa).

In terms of domain architecture, CoA carboxyltransferase N-terminal spans 30 to 294 (IMTKCPECKK…PEVGGEADGE (265 aa)). Zn(2+)-binding residues include C34, C37, C53, and C56. The C4-type zinc-finger motif lies at 34 to 56 (CPECKKIMYTKELQKNLMVCNYC).

Belongs to the AccD/PCCB family. In terms of assembly, acetyl-CoA carboxylase is a heterohexamer composed of biotin carboxyl carrier protein (AccB), biotin carboxylase (AccC) and two subunits each of ACCase subunit alpha (AccA) and ACCase subunit beta (AccD). It depends on Zn(2+) as a cofactor.

The protein localises to the cytoplasm. The enzyme catalyses N(6)-carboxybiotinyl-L-lysyl-[protein] + acetyl-CoA = N(6)-biotinyl-L-lysyl-[protein] + malonyl-CoA. It functions in the pathway lipid metabolism; malonyl-CoA biosynthesis; malonyl-CoA from acetyl-CoA: step 1/1. Functionally, component of the acetyl coenzyme A carboxylase (ACC) complex. Biotin carboxylase (BC) catalyzes the carboxylation of biotin on its carrier protein (BCCP) and then the CO(2) group is transferred by the transcarboxylase to acetyl-CoA to form malonyl-CoA. In Listeria monocytogenes serotype 4a (strain HCC23), this protein is Acetyl-coenzyme A carboxylase carboxyl transferase subunit beta.